Reading from the N-terminus, the 3933-residue chain is Circularly permutated Ras protein 2 (3933 aa).

Residues 12-46 (VHEVKKQELESILLQQEQEKQAKEEKESIKDTDDK) adopt a coiled-coil conformation. Disordered stretches follow at residues 23–101 (ILLQ…IEKK), 136–189 (DIRE…RKET), 1022–1054 (ITTTTTTTTTNNNNNNNEVGESTTPNLPITTTT), and 2817–2839 (NNNNNNNRYNTPVRNGNIGRPTR). Basic and acidic residues predominate over residues 28-62 (EQEKQAKEEKESIKDTDDKPIEDTEHSTNNDKPIE). Over residues 70-92 (TPTTTTTTKPTDEASSSSNNNNN) the composition is skewed to low complexity. The segment covering 136 to 145 (DIREPTDKPF) has biased composition (basic and acidic residues). Positions 146-156 (ENTSNIETTRQ) are enriched in polar residues. Positions 167–215 (KTEAERLEQEQKQKQYDENRKETDRKLELELERLKNKKEEVEQIRAYFQ) form a coiled coil. The segment covering 168–189 (TEAERLEQEQKQKQYDENRKET) has biased composition (basic and acidic residues). Low complexity predominate over residues 2817 to 2826 (NNNNNNNRYN). Residues 2853–2857 (DTAGQ), 2913–2916 (TKAD), and 2976–2983 (GDGGIGKS) each bind GTP. Disordered stretches follow at residues 3036-3086 (LQSA…LSSR), 3107-3142 (RKSSLVEEESKRQYDDDDESKSESSEYDDDDDQDYE), and 3733-3754 (VIEPSSNVDENSEKVETQPSSS). The span at 3070-3086 (PSSSSTRTSVSTSLSSR) shows a compositional bias: low complexity. Over residues 3107 to 3120 (RKSSLVEEESKRQY) the composition is skewed to basic and acidic residues. A compositionally biased stretch (acidic residues) spans 3121–3141 (DDDDESKSESSEYDDDDDQDY).

The protein belongs to the small GTPase superfamily. CpRas family.

The chain is Circularly permutated Ras protein 2 (cpras2) from Dictyostelium discoideum (Social amoeba).